The primary structure comprises 559 residues: Thermosome subunit alpha (559 aa).

Over residues 535 to 547 (SEKKGGEGSKEES) the composition is skewed to basic and acidic residues. The interval 535–559 (SEKKGGEGSKEESGGEGGSTPSLGD) is disordered.

Belongs to the TCP-1 chaperonin family. In terms of assembly, forms a Heterooligomeric complex of two stacked eight-membered rings.

Molecular chaperone; binds unfolded polypeptides in vitro, and has a weak ATPase activity. This chain is Thermosome subunit alpha (thsA), found in Saccharolobus solfataricus (strain ATCC 35092 / DSM 1617 / JCM 11322 / P2) (Sulfolobus solfataricus).